The primary structure comprises 246 residues: NH(3)-dependent NAD(+) synthetase (246 aa).

Residue 29–36 (GLSGGIDS) coordinates ATP. Asp-35 serves as a coordination point for Mg(2+). Arg-110 is a deamido-NAD(+) binding site. Thr-130 contributes to the ATP binding site. A Mg(2+)-binding site is contributed by Glu-135. ATP-binding residues include Lys-159 and Ser-181.

The protein belongs to the NAD synthetase family. Homodimer.

The catalysed reaction is deamido-NAD(+) + NH4(+) + ATP = AMP + diphosphate + NAD(+) + H(+). It participates in cofactor biosynthesis; NAD(+) biosynthesis; NAD(+) from deamido-NAD(+) (ammonia route): step 1/1. Functionally, catalyzes the ATP-dependent amidation of deamido-NAD to form NAD. Uses ammonia as a nitrogen source. This Campylobacter jejuni subsp. jejuni serotype O:6 (strain 81116 / NCTC 11828) protein is NH(3)-dependent NAD(+) synthetase.